The sequence spans 263 residues: Complement C1q tumor necrosis factor-related protein 6 (263 aa).

Positions Met1 to Gly24 are cleaved as a signal peptide. N-linked (GlcNAc...) asparagine glycosylation is present at Asn76. The segment at Leu80–Ser123 is disordered. One can recognise a Collagen-like domain in the interval Gly82–Ser123. Positions Cys124–Asn263 constitute a C1q domain.

It localises to the secreted. This chain is Complement C1q tumor necrosis factor-related protein 6 (C1qtnf6), found in Rattus norvegicus (Rat).